The primary structure comprises 763 residues: 5-methyltetrahydropteroyltriglutamate--homocysteine methyltransferase (763 aa).

Residues Arg16–Lys19 and Lys114 each bind 5-methyltetrahydropteroyltri-L-glutamate. L-homocysteine is bound by residues Ile438 to Ser440 and Glu491. L-methionine contacts are provided by residues Ile438–Ser440 and Glu491. 5-methyltetrahydropteroyltri-L-glutamate is bound by residues Arg522–Cys523 and Trp568. An L-homocysteine-binding site is contributed by Asp606. Asp606 contacts L-methionine. Residue Glu612 participates in 5-methyltetrahydropteroyltri-L-glutamate binding. Zn(2+) contacts are provided by His648, Cys650, and Glu672. The Proton donor role is filled by His701. Cys733 contributes to the Zn(2+) binding site.

Belongs to the vitamin-B12 independent methionine synthase family. It depends on Zn(2+) as a cofactor.

The catalysed reaction is 5-methyltetrahydropteroyltri-L-glutamate + L-homocysteine = tetrahydropteroyltri-L-glutamate + L-methionine. The protein operates within amino-acid biosynthesis; L-methionine biosynthesis via de novo pathway; L-methionine from L-homocysteine (MetE route): step 1/1. In terms of biological role, catalyzes the transfer of a methyl group from 5-methyltetrahydrofolate to homocysteine resulting in methionine formation. The chain is 5-methyltetrahydropteroyltriglutamate--homocysteine methyltransferase from Parvibaculum lavamentivorans (strain DS-1 / DSM 13023 / NCIMB 13966).